Here is a 389-residue protein sequence, read N- to C-terminus: Jasmonate O-methyltransferase (389 aa).

Residue Tyr-18 participates in S-adenosyl-L-homocysteine binding. Gln-25 contacts jasmonate. S-adenosyl-L-homocysteine contacts are provided by Cys-60, Asn-65, Asp-97, Leu-98, Ser-142, and Phe-143. Residues His-163 and Trp-164 each coordinate jasmonate. Asn-186, Asp-272, Phe-274, and Asn-275 together coordinate Mg(2+).

The protein belongs to the methyltransferase superfamily. Type-7 methyltransferase family. It depends on Mg(2+) as a cofactor. Expressed in rosettes, cauline leaves and developing flowers but not in young seedlings.

The protein localises to the cytoplasm. The protein resides in the nucleus. The catalysed reaction is jasmonate + S-adenosyl-L-methionine = methyl (-)-jasmonate + S-adenosyl-L-homocysteine. It functions in the pathway lipid metabolism; oxylipin biosynthesis. Catalyzes the methylation of jasmonate into methyljasmonate, a plant volatile that acts as an important cellular regulator mediating diverse developmental processes and defense responses. This Arabidopsis thaliana (Mouse-ear cress) protein is Jasmonate O-methyltransferase.